Here is a 491-residue protein sequence, read N- to C-terminus: uncharacterized protein (491 aa).

In terms of domain architecture, PE spans 1–92 (MSFVIASPEA…GGGSYASAEI (92 aa)). Disordered regions lie at residues 114–156 (PLVG…AGGA), 376–400 (AGGSGGSGAPGSVSSGGVGGAGNPG), and 419–491 (AGQG…GPDG). Residues 128 to 145 (GQPGGDGGILWGNGGNGG) show a composition bias toward gly residues. Over residues 432–480 (GGPGGVGGHGGTAILFGDGGAGGAGAAGGPGTPDGAAGPGGSGGTGGLL) the composition is skewed to gly residues.

This sequence belongs to the mycobacterial PE family. PGRS subfamily.

This is an uncharacterized protein from Mycobacterium bovis (strain ATCC BAA-935 / AF2122/97).